Here is a 312-residue protein sequence, read N- to C-terminus: Olfactory receptor 6Z7 (312 aa).

The Extracellular portion of the chain corresponds to 1–29 (MERSLALANMTRVQQFILLGLSTRLDIRD). N9 carries N-linked (GlcNAc...) asparagine glycosylation. A helical membrane pass occupies residues 30–50 (ALFAVFLTLYLLTLLENTLII). Residues 51–69 (YLICSHKELHKPMYFFLGN) lie on the Cytoplasmic side of the membrane. Residues 70–90 (LSCLEMCYVSVTMPTLLMGLW) form a helical membrane-spanning segment. N91 is a topological domain (extracellular). Residues 92 to 112 (GLYHIPFIACMTQLFFFIVLV) form a helical membrane-spanning segment. A disulfide bridge links C101 with C193. Over 113–141 (GTECILLASMAYDRYVAICRPLHYPVLMR) the chain is Cytoplasmic. A helical membrane pass occupies residues 142-162 (PQVCLGLAMISWLGGLLVSMI). Residues 163 to 195 (KTTCIATLSYCGPNVLNHFFCDVSPLLNLSCTH) are Extracellular-facing. N-linked (GlcNAc...) asparagine glycosylation is present at N190. The helical transmembrane segment at 196 to 216 (VALTELVDFISAIVILWGCFL) threads the bilayer. Residues 217–241 (TTMASYVAIGRAVLRMPSTTARYKA) are Cytoplasmic-facing. Residues 242–262 (FSTCASHLVVVGIFYSVTIFI) form a helical membrane-spanning segment. Over 263–275 (YARPKRIEAMDLN) the chain is Extracellular. A helical membrane pass occupies residues 276–296 (KVLSVIYTVVTPMCNPVIYCL). The Cytoplasmic portion of the chain corresponds to 297–312 (RNKEVQVALHRTMHWS).

Belongs to the G-protein coupled receptor 1 family.

It is found in the cell membrane. Odorant receptor. The protein is Olfactory receptor 6Z7 of Mus musculus (Mouse).